A 458-amino-acid chain; its full sequence is Hepatocyte nuclear factor 3-beta (458 aa).

A transactivation domain 1 region spans residues 14 to 93 (DWSSYYAEPE…AGAMAGMSGS (80 aa)). Residues 106–113 (LSPSLSPL) carry the Nuclear localization signal motif. Phosphothreonine; by PKB/AKT1 is present on T156. Positions 159-252 (KPPYSYISLI…ENGCYLRRQK (94 aa)) form a DNA-binding region, fork-head. Residues S212 and S283 each carry the phosphoserine modification. The interval 286-365 (QLGEAAGSAS…PGLPPEAHLK (80 aa)) is disordered. The span at 294–310 (ASETPAGTESPHSSASP) shows a compositional bias: polar residues. Position 301 is a phosphothreonine (T301). Residues S303, S306, S307, and S309 each carry the phosphoserine modification. The segment covering 339-352 (PGQQQQAAAHLLGP) has biased composition (low complexity). The tract at residues 361-458 (EAHLKPEHHY…VYSRPIMNSS (98 aa)) is transactivation domain 2. A phosphoserine mark is found at S437 and S458.

In terms of assembly, binds DNA as a monomer. Binds TLE1. Interacts with FOXA1 and FOXA3. Interacts with PRKDC. Interacts with AKT1. Interacts with TET1; this interaction may recruit TET1 to specific genomic loci to mediate their demethylation. Phosphorylation on Thr-156 abolishes binding to target promoters and subsequent transcription activation upon insulin stimulation. Liver.

The protein resides in the nucleus. The protein localises to the cytoplasm. Its function is as follows. Transcription factor that is involved in embryonic development, establishment of tissue-specific gene expression and regulation of gene expression in differentiated tissues. Is thought to act as a 'pioneer' factor opening the compacted chromatin for other proteins through interactions with nucleosomal core histones and thereby replacing linker histones at target enhancer and/or promoter sites. Binds DNA with the consensus sequence 5'-[AC]A[AT]T[AG]TT[GT][AG][CT]T[CT]-3'. In embryonic development is required for notochord formation. Involved in the development of multiple endoderm-derived organ systems such as the liver, pancreas and lungs; FOXA1 and FOXA2 seem to have at least in part redundant roles. Originally described as a transcription activator for a number of liver genes such as AFP, albumin, tyrosine aminotransferase, PEPCK, etc. Interacts with the cis-acting regulatory regions of these genes. Involved in glucose homeostasis; regulates the expression of genes important for glucose sensing in pancreatic beta-cells and glucose homeostasis. Involved in regulation of fat metabolism. Acts synergistically with ONECUT1 to activate transcription of female-specific CYP2C12; the function is inhibited by growth hormone-activated STAT5B. Acts synergistically with HNF4A to activate transcription of APOA1. This is Hepatocyte nuclear factor 3-beta (Foxa2) from Rattus norvegicus (Rat).